Reading from the N-terminus, the 751-residue chain is Photosystem I P700 chlorophyll a apoprotein A1 (751 aa).

The next 8 helical transmembrane spans lie at 73–96, 159–182, 198–222, 294–312, 349–372, 388–414, 436–458, and 533–551; these read VFSAHFGQLGIIFIWLSGMYFHGA, LYSTAIGGLVMAAAMFFAGWFHFH, LNHHLSGLLGLGSLAWAGHQIHVSL, TAHHHLAIAVLFIVAGHMY, WHAQLAINLALFGSLSIIVAHHQY, LSLFTHHNWIGGFCIVGAAAHAAIFMI, AIISHLNWVCIFLGFHSFGLYIH, and FLVHHVHAFTIHVTVLILL. [4Fe-4S] cluster contacts are provided by Cys575 and Cys584. A run of 2 helical transmembrane segments spans residues 591-612 and 665-687; these read HVFLGLFWMYNAISVVIFHFSW and LSAYGLIFLGAHFVWAFSLMFLF. His676 provides a ligand contact to chlorophyll a'. Chlorophyll a-binding residues include Met684 and Tyr692. Trp693 provides a ligand contact to phylloquinone. The chain crosses the membrane as a helical span at residues 725–745; sequence AVGVAHYLLGGIATTWSFFLA.

Belongs to the PsaA/PsaB family. In terms of assembly, the PsaA/B heterodimer binds the P700 chlorophyll special pair and subsequent electron acceptors. PSI consists of a core antenna complex that captures photons, and an electron transfer chain that converts photonic excitation into a charge separation. The eukaryotic PSI reaction center is composed of at least 11 subunits. The cofactor is P700 is a chlorophyll a/chlorophyll a' dimer, A0 is one or more chlorophyll a, A1 is one or both phylloquinones and FX is a shared 4Fe-4S iron-sulfur center..

The protein resides in the plastid. Its subcellular location is the chloroplast thylakoid membrane. The catalysed reaction is reduced [plastocyanin] + hnu + oxidized [2Fe-2S]-[ferredoxin] = oxidized [plastocyanin] + reduced [2Fe-2S]-[ferredoxin]. PsaA and PsaB bind P700, the primary electron donor of photosystem I (PSI), as well as the electron acceptors A0, A1 and FX. PSI is a plastocyanin/cytochrome c6-ferredoxin oxidoreductase, converting photonic excitation into a charge separation, which transfers an electron from the donor P700 chlorophyll pair to the spectroscopically characterized acceptors A0, A1, FX, FA and FB in turn. Oxidized P700 is reduced on the lumenal side of the thylakoid membrane by plastocyanin or cytochrome c6. In Tupiella akineta (Green alga), this protein is Photosystem I P700 chlorophyll a apoprotein A1.